A 193-amino-acid chain; its full sequence is Penicillin-binding protein activator LpoB (193 aa).

The signal sequence occupies residues Met-1–Gly-16. Cys-17 carries the N-palmitoyl cysteine lipid modification. The S-diacylglycerol cysteine moiety is linked to residue Cys-17. Residues Glu-24 to Met-55 form a disordered region. Positions Val-35 to Lys-54 are enriched in pro residues.

It belongs to the LpoB family. Interacts with PBP1b.

It is found in the cell outer membrane. Its function is as follows. Regulator of peptidoglycan synthesis that is essential for the function of penicillin-binding protein 1B (PBP1b). The protein is Penicillin-binding protein activator LpoB of Yersinia enterocolitica serotype O:8 / biotype 1B (strain NCTC 13174 / 8081).